A 213-amino-acid chain; its full sequence is Dimethylamine corrinoid protein (213 aa).

In terms of domain architecture, B12-binding N-terminal spans 1–90 (MSKEELLQEL…LMPEGASGSK (90 aa)). The B12-binding domain maps to 91 to 213 (LGVIVNGTVE…AVAKAKELLA (123 aa)). Histidine 104 provides a ligand contact to methylcob(III)alamin.

This sequence belongs to the methylamine corrinoid protein family. Copurifies with MtbA.

It participates in one-carbon metabolism; methanogenesis from dimethylamine. Its function is as follows. Acts as a methyl group carrier between MtbB1 and MtbA. Binds 1 corrinoid cofactor per protein, is subsequently demethylated by MtbA. The polypeptide is Dimethylamine corrinoid protein (Methanosarcina barkeri).